We begin with the raw amino-acid sequence, 201 residues long: Small ribosomal subunit protein uS4c (201 aa).

Residues 20–44 (GLTSKRPRAGSDLRNQSRSGKKSQY) are disordered. The 64-residue stretch at 89-152 (MRLDNILFRL…NSRTLVQNLL (64 aa)) folds into the S4 RNA-binding domain.

Belongs to the universal ribosomal protein uS4 family. In terms of assembly, part of the 30S ribosomal subunit. Contacts protein S5. The interaction surface between S4 and S5 is involved in control of translational fidelity.

The protein localises to the plastid. It localises to the chloroplast. Its function is as follows. One of the primary rRNA binding proteins, it binds directly to 16S rRNA where it nucleates assembly of the body of the 30S subunit. With S5 and S12 plays an important role in translational accuracy. The protein is Small ribosomal subunit protein uS4c (rps4) of Arabis hirsuta (Hairy rock-cress).